The chain runs to 434 residues: UDP-N-acetylenolpyruvoylglucosamine reductase (434 aa).

The FAD-binding PCMH-type domain occupies 51–238 (IGAAPAGVVE…TAVEFQLTTD (188 aa)). Arginine 216 is an active-site residue. The Proton donor role is filled by serine 299. Residue glutamate 425 is part of the active site.

The protein belongs to the MurB family. FAD is required as a cofactor.

It localises to the cytoplasm. The enzyme catalyses UDP-N-acetyl-alpha-D-muramate + NADP(+) = UDP-N-acetyl-3-O-(1-carboxyvinyl)-alpha-D-glucosamine + NADPH + H(+). Its pathway is cell wall biogenesis; peptidoglycan biosynthesis. Functionally, cell wall formation. The polypeptide is UDP-N-acetylenolpyruvoylglucosamine reductase (Corynebacterium jeikeium (strain K411)).